We begin with the raw amino-acid sequence, 713 residues long: Macrophage-expressed gene 1 protein (713 aa).

A signal peptide spans 1 to 19 (MNSFMALVLIWMIIACAEA). Residues 30 to 345 (GFQICKNALK…TAVRHYYTFN (316 aa)) enclose the MACPF domain. A disulfide bridge links cysteine 34 with cysteine 70. The next 2 beta stranded transmembrane spans lie at 113-120 (LSINTELA) and 127-132 (GKFSTE). Asparagine 185 carries N-linked (GlcNAc...) asparagine glycosylation. A run of 2 beta stranded transmembrane segments spans residues 235-244 (TVTASAGIAF) and 248-256 (VNFKVETDY). An N-linked (GlcNAc...) asparagine glycan is attached at asparagine 269. A disulfide bond links cysteine 350 and cysteine 369. The N-linked (GlcNAc...) asparagine glycan is linked to asparagine 375. Intrachain disulfides connect cysteine 385-cysteine 394, cysteine 432-cysteine 446, cysteine 436-cysteine 442, cysteine 531-cysteine 569, and cysteine 554-cysteine 574. Positions 410 to 653 (PPGYSPVHLL…GDSNGMSGGE (244 aa)) are P2. Residues 654–674 (AAGITLGVTIALGIVITLAIY) traverse the membrane as a helical segment.

This sequence belongs to the MPEG1 family. In terms of assembly, homooligomer; predominantly forms a homooligomeric arc-shaped pore complex instead of complete rings of 16 subunits. Proteolytically processed in two steps to generate the Macrophage-expressed gene 1 protein, processed form: cleaved by trypsin in proximity of the helical transmembrane domain releases the ectodomain into the lysosomal lumen to orient the pore-forming domain toward the endogenous membranes, and processed by the asparagine endopeptidase (LGMN). Proteolytic processing in antigen-containing vesicles is pH-dependent. Post-translationally, monoubiquitinated in response to bacterial infection; ubiquitination is required for vesicular localization and antibacterial activity and can be blocked by bacterial cell cycle inhibiting factor (cif). In terms of tissue distribution, expressed constitutively in a variety of cell types including macrophages, microglia, neutrophils, T cells, marginal zone B cells, keratinocytes, splenocytes and intestinal epithelial cells.

The protein resides in the cytoplasmic vesicle membrane. It is found in the cytoplasmic vesicle. It localises to the phagosome membrane. Forms arc- and ring-shaped pre-pores on top of the membrane at neutral to slightly acidic pH conditions and converts to pores upon acidification. Undergoes transition from the pre-pore to the pore in a processive clockwise hand-over-hand process. In the pore state, 2 alpha-helical regions refold into transmembrane hairpins (TMH1 and TMH2) in each protomer that form in the ensemble complex giant beta-barrel transmembrane pores. Its function is as follows. Pore-forming protein involved in both innate and adaptive immunity. Plays a central role in antigen cross-presentation in dendritic cells by forming a pore in antigen-containing compartments, thereby promoting delivery of antigens for cross-presentation. Also involved in innate immune response following bacterial infection; shows antibacterial activity against a wide spectrum of Gram-positive, Gram-negative and acid-fast bacteria. Reduces the viability of the intracytosolic pathogen L.monocytogenes by inhibiting acidification of the phagocytic vacuole of host cells which restricts bacterial translocation from the vacuole to the cytosol. Required for the antibacterial activity of reactive oxygen species and nitric oxide. In terms of biological role, pore-forming protein that plays a central role in antigen cross-presentation in dendritic cells by mediating delivery of antigens for cross-presentation. Dendritic cells bridge innate and adaptive immunity by capturing exogenous antigens on MHC class-I molecules and presenting them to naive CD8(+) T-cells. Acts by forming a pore in antigen-containing compartments, promoting the release of antigens into the cytosol, enabling generation of MHCI:peptide complexes and T-cell priming. In Mus musculus (Mouse), this protein is Macrophage-expressed gene 1 protein.